The chain runs to 317 residues: L-lactate dehydrogenase (317 aa).

Residues valine 16, aspartate 37, and tyrosine 69 each coordinate NAD(+). Substrate contacts are provided by residues glutamine 86, arginine 92, and 124–127 (NPVD). Residues 122–124 (ASN) and serine 147 each bind NAD(+). Residue 152–155 (DSAR) participates in substrate binding. Catalysis depends on histidine 179, which acts as the Proton acceptor. Position 223 is a phosphotyrosine (tyrosine 223). Position 232 (threonine 232) interacts with substrate.

It belongs to the LDH/MDH superfamily. LDH family. As to quaternary structure, homotetramer.

The protein resides in the cytoplasm. The enzyme catalyses (S)-lactate + NAD(+) = pyruvate + NADH + H(+). It participates in fermentation; pyruvate fermentation to lactate; (S)-lactate from pyruvate: step 1/1. Catalyzes the conversion of lactate to pyruvate. The protein is L-lactate dehydrogenase of Mycoplasma capricolum subsp. capricolum (strain California kid / ATCC 27343 / NCTC 10154).